The primary structure comprises 156 residues: RING finger protein 224 (156 aa).

Residues 24–71 (CIICCSAYDLSGHLPRRLYCGHTFCQACVRRLDTPAPEQRWIPCPQCR) form an RING-type zinc finger.

In Homo sapiens (Human), this protein is RING finger protein 224 (RNF224).